The chain runs to 745 residues: MKEKSKNAGRTRREKENSEFYELAKLLPLPSAITSQSDKASIIRLTTSYLKMRIVFPEGLGESWGHVSRTTSLENVGRELGSHLLQTLDGFIFVVAPDGKILYISETASVHLGLSQEELTGNSIYEYIHPADHDEMTAVLTAHQPYHSHFVHEYEMERSFFLRMKCVLAKANAGLTCGGYKVIHCSGYLKIRQYSLDMSPFDGCYQNVGLVAVGHSLPPSAVTEIKLHSNMFMFRASLDMKLIFLDSRVAELTGYEPQDLIEKTLYHHVHSCDTFHLRCAHHLLLVKGQVTTKYYRFLAKQGGWVWVQSYATIVHNSRSSRPHCIVSVNYVLTDTEYKGLQLSLDQAASTKPSFTYNSPSNPVTENRRVGKSRVSRTKTKTRLSPYSQYPGFPTDRSESDQDSPWGGSPLTDSASPQLLEQCEGIESSCVYRQFSDPRSLCYGLPLTEDHHTSNELYSHPHSESCERGCCKAGRYFLGTPQPGREAWWGAARSVLPLPKSSPENGDSFEGVSPHIASIHSLQVRGHWDEDSAVSSAPDGGSASDSGDRFRADQCRSSPQEPSKIETLIRATQQMIKEEESRLQLRKLPTDVPLEPTNSLAKSFHSTDFPQSAMQSVVCRGPAQVISPAPSPVPLSRLSSPLPDRLSKGKDFLQNELSSSQLPLTGTCAVSPTPALYSLHPRQYLEKHAAYSLTSYALEHLYEADTFRGYSLGCSGSSHYDMTTHLRKAEQAPGHKGTSVIITNGS.

Residues 1–53 (MKEKSKNAGRTRREKENSEFYELAKLLPLPSAITSQSDKASIIRLTTSYLKMR) enclose the bHLH domain. PAS domains follow at residues 77-147 (GREL…QPYH) and 218-288 (PPSA…LVKG). Residues 336-745 (EYKGLQLSLD…GTSVIITNGS (410 aa)) enclose the Single-minded C-terminal domain. A compositionally biased stretch (polar residues) spans 350–364 (TKPSFTYNSPSNPVT). 2 disordered regions span residues 350 to 413 (TKPS…LTDS) and 529 to 563 (EDSA…EPSK). A Nuclear localization signal motif is present at residues 368–387 (RVGKSRVSRTKTKTRLSPYS). Positions 369–381 (VGKSRVSRTKTKT) are enriched in basic residues. Positions 532 to 544 (AVSSAPDGGSASD) are enriched in low complexity.

As to quaternary structure, efficient DNA binding requires dimerization with another bHLH protein. Heterodimer of sim1a and arnt. As to expression, expressed in embryonic forebrain at the eleven somite stage. Detected in brain throughout embryonic development.

Its subcellular location is the nucleus. Functionally, transcriptional factor that may have pleiotropic effects during embryogenesis and in the adult. This is Single-minded homolog 1-A (sim1a) from Danio rerio (Zebrafish).